We begin with the raw amino-acid sequence, 77 residues long: Epoxide hydrolase (77 aa).

As to quaternary structure, monomer.

The catalysed reaction is an epoxide + H2O = an ethanediol. Its function is as follows. This enzyme acts on aliphatic epoxides. Its substrates include epichlorohydrin, epibromohydrin, epoxyoctane and styrene epoxide. In Pseudomonas sp. (strain AD1), this protein is Epoxide hydrolase.